The primary structure comprises 93 residues: MARVTVEDAVNQIGNRFDMILVAARRARQIAVQGKDPMVEEENDKPTVIALREIELGLVTADTLDADERQTVREREAAEIAAVAAIAEGRNTI.

Belongs to the RNA polymerase subunit omega family. The RNAP catalytic core consists of 2 alpha, 1 beta, 1 beta' and 1 omega subunit. When a sigma factor is associated with the core the holoenzyme is formed, which can initiate transcription.

The enzyme catalyses RNA(n) + a ribonucleoside 5'-triphosphate = RNA(n+1) + diphosphate. Functionally, promotes RNA polymerase assembly. Latches the N- and C-terminal regions of the beta' subunit thereby facilitating its interaction with the beta and alpha subunits. The sequence is that of DNA-directed RNA polymerase subunit omega from Shewanella loihica (strain ATCC BAA-1088 / PV-4).